A 391-amino-acid chain; its full sequence is Processive diacylglycerol beta-glucosyltransferase (391 aa).

It belongs to the glycosyltransferase 28 family. UgtP subfamily.

It localises to the cell membrane. It carries out the reaction a 1,2-diacyl-3-O-(beta-D-glucopyranosyl)-sn-glycerol + UDP-alpha-D-glucose = a 1,2-diacyl-3-O-(beta-D-Glc-(1-&gt;6)-beta-D-Glc)-sn-glycerol + UDP + H(+). It catalyses the reaction a 1,2-diacyl-sn-glycerol + UDP-alpha-D-glucose = a 1,2-diacyl-3-O-(beta-D-glucopyranosyl)-sn-glycerol + UDP + H(+). The protein operates within glycolipid metabolism; diglucosyl-diacylglycerol biosynthesis. In terms of biological role, processive glucosyltransferase involved in the biosynthesis of both the bilayer- and non-bilayer-forming membrane glucolipids. Is able to successively transfer two glucosyl residues to diacylglycerol (DAG), thereby catalyzing the formation of beta-monoglucosyl-DAG (3-O-(beta-D-glucopyranosyl)-1,2-diacyl-sn-glycerol) and beta-diglucosyl-DAG (3-O-(beta-D-glucopyranosyl-beta-(1-&gt;6)-D-glucopyranosyl)-1,2-diacyl-sn-glycerol). Beta-diglucosyl-DAG is the predominant glycolipid found in Bacillales and is also used as a membrane anchor for lipoteichoic acid (LTA). In Staphylococcus epidermidis (strain ATCC 35984 / DSM 28319 / BCRC 17069 / CCUG 31568 / BM 3577 / RP62A), this protein is Processive diacylglycerol beta-glucosyltransferase.